Consider the following 469-residue polypeptide: Trigger factor (469 aa).

In terms of domain architecture, PPIase FKBP-type spans 165 to 250 (GDCVTIDYLG…VKAISKPDEL (86 aa)). The segment covering 439–460 (EYDESDLTEKKPEKKKGVEKTP) has biased composition (basic and acidic residues). The segment at 439-469 (EYDESDLTEKKPEKKKGVEKTPIRKKAPKKG) is disordered.

It belongs to the FKBP-type PPIase family. Tig subfamily.

It is found in the cytoplasm. The catalysed reaction is [protein]-peptidylproline (omega=180) = [protein]-peptidylproline (omega=0). In terms of biological role, involved in protein export. Acts as a chaperone by maintaining the newly synthesized protein in an open conformation. Functions as a peptidyl-prolyl cis-trans isomerase. This chain is Trigger factor, found in Bartonella quintana (strain Toulouse) (Rochalimaea quintana).